A 266-amino-acid polypeptide reads, in one-letter code: Putative carbamate hydrolase RutD (266 aa).

Residues 14-238 (PVVVLSAGLG…RVEMPWGGHA (225 aa)) form the AB hydrolase-1 domain.

This sequence belongs to the AB hydrolase superfamily. Hydrolase RutD family.

The enzyme catalyses carbamate + 2 H(+) = NH4(+) + CO2. In terms of biological role, involved in pyrimidine catabolism. May facilitate the hydrolysis of carbamate, a reaction that can also occur spontaneously. The protein is Putative carbamate hydrolase RutD of Klebsiella pneumoniae (strain 342).